The primary structure comprises 645 residues: Threonine--tRNA ligase (645 aa).

The 63-residue stretch at 1 to 63 (MDQIKIKFPD…ESDGDIEIVT (63 aa)) folds into the TGS domain. The segment at 242 to 540 (DHRKIGKELE…LTEETKGAFP (299 aa)) is catalytic. Zn(2+)-binding residues include C336, H387, and H517.

This sequence belongs to the class-II aminoacyl-tRNA synthetase family. Homodimer. It depends on Zn(2+) as a cofactor.

It localises to the cytoplasm. It carries out the reaction tRNA(Thr) + L-threonine + ATP = L-threonyl-tRNA(Thr) + AMP + diphosphate + H(+). Catalyzes the attachment of threonine to tRNA(Thr) in a two-step reaction: L-threonine is first activated by ATP to form Thr-AMP and then transferred to the acceptor end of tRNA(Thr). Also edits incorrectly charged L-seryl-tRNA(Thr). The protein is Threonine--tRNA ligase of Staphylococcus saprophyticus subsp. saprophyticus (strain ATCC 15305 / DSM 20229 / NCIMB 8711 / NCTC 7292 / S-41).